Reading from the N-terminus, the 427-residue chain is Acyl-CoA hydrolase 2 (427 aa).

15 to 83 (LLQKLPSSSL…FLLKQYDYFG (69 aa)) lines the a nucleoside 3',5'-cyclic phosphate pocket. Catalysis depends on charge relay system residues Asp-337, Ser-359, and Gln-409. The short motif at 425–427 (SKL) is the Microbody targeting signal element.

Belongs to the C/M/P thioester hydrolase family. Homotetramer. As to expression, mostly expressed in leaves and flowers, and, to a lower extent, in seedlings and siliques.

The protein resides in the peroxisome matrix. It carries out the reaction a fatty acyl-CoA + H2O = a fatty acid + CoA + H(+). The enzyme catalyses dodecanoyl-CoA + H2O = dodecanoate + CoA + H(+). It catalyses the reaction tetradecanoyl-CoA + H2O = tetradecanoate + CoA + H(+). The catalysed reaction is octadecanoyl-CoA + H2O = octadecanoate + CoA + H(+). It carries out the reaction (9Z)-hexadecenoyl-CoA + H2O = (9Z)-hexadecenoate + CoA + H(+). The enzyme catalyses (5Z,8Z,11Z,14Z)-eicosatetraenoyl-CoA + H2O = (5Z,8Z,11Z,14Z)-eicosatetraenoate + CoA + H(+). It catalyses the reaction hexadecanoyl-CoA + H2O = hexadecanoate + CoA + H(+). The catalysed reaction is (9Z)-octadecenoyl-CoA + H2O = (9Z)-octadecenoate + CoA + H(+). It carries out the reaction (9Z,12Z)-octadecadienoyl-CoA + H2O = (9Z,12Z)-octadecadienoate + CoA + H(+). The protein operates within lipid metabolism; fatty acid metabolism. Insensitive to feedback inhibition by free coenzyme A (CoASH). Catalyzes the hydrolysis of acyl-CoAs into free fatty acids and coenzyme A (CoASH), regulating their respective intracellular levels. Active with both medium chain and long chain acyl-CoAs (e.g. 12:0-CoA, 14:0-CoA, 16:0-CoA, 18:0-CoA, 16:1-CoA, 18:1-CoA, 18:2-CoA and 20:4-CoA) as substrates, palmitoleoyl-CoA (16:1-CoA) being the favorite substrate. The sequence is that of Acyl-CoA hydrolase 2 from Arabidopsis thaliana (Mouse-ear cress).